We begin with the raw amino-acid sequence, 396 residues long: L-lactate dehydrogenase (396 aa).

The region spanning 1–380 is the FMN hydroxy acid dehydrogenase domain; the sequence is MIISAASDYR…SGDSLVQELG (380 aa). Tyr24 contributes to the substrate binding site. FMN is bound by residues Ser106 and Gln127. A substrate-binding site is contributed by Tyr129. An FMN-binding site is contributed by Thr155. Arg164 is a substrate binding site. Residue Lys251 participates in FMN binding. The active-site Proton acceptor is His275. Arg278 serves as a coordination point for substrate. Position 306–330 (306–330) interacts with FMN; that stretch reads DSGIRNGLDVVRMIALGADTVLLGR.

Belongs to the FMN-dependent alpha-hydroxy acid dehydrogenase family. Requires FMN as cofactor.

The protein resides in the cell inner membrane. It carries out the reaction (S)-lactate + A = pyruvate + AH2. Functionally, catalyzes the conversion of L-lactate to pyruvate. Is coupled to the respiratory chain. The chain is L-lactate dehydrogenase from Salmonella paratyphi B (strain ATCC BAA-1250 / SPB7).